Consider the following 274-residue polypeptide: Large ribosomal subunit protein uL2cz/uL2cy (274 aa).

Polar residues predominate over residues 1–15 (MAINLYKTSTPSTRN). 2 disordered regions span residues 1 to 22 (MAIN…DSQV) and 225 to 274 (PVDH…RRSK).

Belongs to the universal ribosomal protein uL2 family. Part of the 50S ribosomal subunit.

Its subcellular location is the plastid. It is found in the chloroplast. The chain is Large ribosomal subunit protein uL2cz/uL2cy (rpl2-A) from Lobularia maritima (Sweet alyssum).